Consider the following 216-residue polypeptide: Mite allergen Lep d 7 (216 aa).

Residues 1-19 (MQYLAIAVIVALAGLSAAA) form the signal peptide.

The protein belongs to the mite group 7 allergen family.

The protein resides in the secreted. This chain is Mite allergen Lep d 7, found in Lepidoglyphus destructor (Storage mite).